Here is a 233-residue protein sequence, read N- to C-terminus: Proteasome subunit alpha (233 aa).

Belongs to the peptidase T1A family. As to quaternary structure, the 20S proteasome core is composed of 14 alpha and 14 beta subunits that assemble into four stacked heptameric rings, resulting in a barrel-shaped structure. The two inner rings, each composed of seven catalytic beta subunits, are sandwiched by two outer rings, each composed of seven alpha subunits. The catalytic chamber with the active sites is on the inside of the barrel. Has a gated structure, the ends of the cylinder being occluded by the N-termini of the alpha-subunits. Is capped at one or both ends by the proteasome regulatory ATPase, PAN. In terms of processing, the N-terminus is blocked.

It is found in the cytoplasm. Its activity is regulated as follows. The formation of the proteasomal ATPase PAN-20S proteasome complex, via the docking of the C-termini of PAN into the intersubunit pockets in the alpha-rings, triggers opening of the gate for substrate entry. Interconversion between the open-gate and close-gate conformations leads to a dynamic regulation of the 20S proteasome proteolysis activity. Functionally, component of the proteasome core, a large protease complex with broad specificity involved in protein degradation. The T.acidophilum proteasome is able to cleave oligopeptides after Tyr, Leu, Phe, and to a lesser extent after Glu and Arg. Thus, displays chymotrypsin-like activity and low level of caspase-like and trypsin-like activities. The sequence is that of Proteasome subunit alpha from Thermoplasma acidophilum (strain ATCC 25905 / DSM 1728 / JCM 9062 / NBRC 15155 / AMRC-C165).